The following is a 193-amino-acid chain: Imidazoleglycerol-phosphate dehydratase (193 aa).

Belongs to the imidazoleglycerol-phosphate dehydratase family.

Its subcellular location is the cytoplasm. The catalysed reaction is D-erythro-1-(imidazol-4-yl)glycerol 3-phosphate = 3-(imidazol-4-yl)-2-oxopropyl phosphate + H2O. The protein operates within amino-acid biosynthesis; L-histidine biosynthesis; L-histidine from 5-phospho-alpha-D-ribose 1-diphosphate: step 6/9. The chain is Imidazoleglycerol-phosphate dehydratase from Methanoculleus marisnigri (strain ATCC 35101 / DSM 1498 / JR1).